The sequence spans 530 residues: Cation channel sperm-associated protein 2 (530 aa).

Over 1-108 (MAAYQQEEQM…LWAGWVLECP (108 aa)) the chain is Cytoplasmic. Residues 109–131 (LFKNFIIFLVFLNTIILMVEIEL) traverse the membrane as a helical segment. Residues 132-140 (LESTNTKLW) lie on the Extracellular side of the membrane. The chain crosses the membrane as a helical span at residues 141-166 (PLKLTLEVAAWFILLIFILEILLKWL). Topologically, residues 167–175 (SNFSVFWKS) are cytoplasmic. The chain crosses the membrane as a helical span at residues 176 to 200 (AWNVFDFVVTMLSLLPEVVVLVGVT). The Extracellular portion of the chain corresponds to 201 to 203 (GQS). Residues 204–222 (VWLQLLRICRVLRSLKLLA) form a helical membrane-spanning segment. The Cytoplasmic portion of the chain corresponds to 223–239 (QFRQIQIIILVLVRALK). Residues 240 to 262 (SMTFLLMLLLIFFYIFAVTGVYV) form a helical membrane-spanning segment. Over 263–281 (FSEYTRSPRQDLEYHVFFS) the chain is Extracellular. The helical; Pore-forming intramembrane region spans 282–294 (DLPNSLVTVFILF). Residues 295–314 (TLDHWYALLQDVWKVPEVSR) lie on the Extracellular side of the membrane. The chain crosses the membrane as a helical span at residues 315 to 341 (IFSSIYFILWLLLGSIIFRSIIVAMMV). Over 342 to 530 (TNFQNIRKEL…VQALMNLEDK (189 aa)) the chain is Cytoplasmic. The interval 378–458 (MSHEALTSSH…TSSSYSSSSE (81 aa)) is disordered. Positions 429-440 (KTEETLSKKREY) are enriched in basic and acidic residues. The segment covering 442–458 (SSSCVSSTSSSYSSSSE) has biased composition (low complexity).

Belongs to the cation channel sperm-associated (TC 1.A.1.19) family. In terms of assembly, component of the CatSper complex or CatSpermasome composed of the core pore-forming members CATSPER1, CATSPER2, CATSPER3 and CATSPER4 as well as auxiliary members CATSPERB, CATSPERG, CATSPERD, CATSPERE, CATSPERZ, C2CD6/CATSPERT, TMEM249, TMEM262 and EFCAB9. HSPA1 may be an additional auxiliary complex member. The core complex members CATSPER1, CATSPER2, CATSPER3 and CATSPER4 form a heterotetrameric channel. The auxiliary CATSPERB, CATSPERG, CATSPERD and CATSPERE subunits form a pavilion-like structure over the pore which stabilizes the complex through interactions with CATSPER4, CATSPER3, CATSPER1 and CATSPER2 respectively. TMEM262/CATSPERH interacts with CATSPERB, further stabilizing the complex. C2CD6/CATSPERT interacts at least with CATSPERD and is required for targeting the CatSper complex in the flagellar membrane. Interacts with Ca(v)3.3/CACNA1I, leading to suppression of T-type calcium channel activity. In terms of tissue distribution, testis-specific.

The protein resides in the cell projection. The protein localises to the cilium. It is found in the flagellum membrane. The catalysed reaction is Ca(2+)(in) = Ca(2+)(out). The CatSper calcium channel is indirectly activated by extracellular progesterone and prostaglandins following the sequence: progesterone &gt; PGF1-alpha = PGE1 &gt; PGA1 &gt; PGE2 &gt;&gt; PGD2. The CatSper calcium channel is directly inhibited by endocannabinoid 2-arachidonoylglycerol (2AG). Indirect activation by progesterone takes place via the following mechanism: progesterone binds and activates the acylglycerol lipase ABHD2, which in turn mediates hydrolysis of 2AG inhibitor, relieving inhibition of the CatSper channel. The primary effect of progesterone activation is to shift voltage dependence towards more physiological, negative membrane potentials; it is not mediated by metabotropic receptors and second messengers. Sperm capacitation enhances the effect of progesterone by providing additional negative shift. Also activated by the elevation of intracellular pH. In terms of biological role, pore-forming subunit of the CatSper complex, a sperm-specific voltage-gated calcium channel, that plays a central role in calcium-dependent physiological responses essential for successful fertilization, such as sperm hyperactivation, acrosome reaction and chemotaxis towards the oocyte. In Homo sapiens (Human), this protein is Cation channel sperm-associated protein 2 (CATSPER2).